The following is a 2532-amino-acid chain: Lovastatin diketide synthase lovF (2532 aa).

The 421-residue stretch at 10–430 (PAPIAMVGMG…GANAHAIVEQ (421 aa)) folds into the Ketosynthase family 3 (KS3) domain. Residues Cys-183, His-318, and His-353 each act as for beta-ketoacyl synthase activity in the active site. Residues 545–870 (VFTGQGAQWF…PYLSCLSRGK (326 aa)) are malonyl-CoA:ACP transacylase (MAT) domain. Catalysis depends on Ser-635, which acts as the For malonyltransferase activity. The N-terminal hotdog fold stretch occupies residues 941–1078 (HDLIGLQEPL…GLVRAEMDQP (138 aa)). The tract at residues 941 to 1246 (HDLIGLQEPL…LEGLVFQSLG (306 aa)) is dehydratase (DH) domain. The region spanning 941-1251 (HDLIGLQEPL…FQSLGASLGT (311 aa)) is the PKS/mFAS DH domain. Catalysis depends on His-973, which acts as the Proton acceptor; for dehydratase activity. A disordered region spans residues 1075 to 1094 (MDQPPSSLSNQQRIDPRPWS). The segment covering 1078 to 1087 (PPSSLSNQQR) has biased composition (polar residues). The interval 1092–1251 (PWSRKTAPQE…FQSLGASLGT (160 aa)) is C-terminal hotdog fold. Residue Asp-1159 is the Proton donor; for dehydratase activity of the active site. Residues 1423-1607 (ELVRLCCHKN…ARDCDSHEFY (185 aa)) form a methyltransferase (CMet) domain region. The interval 1825–2144 (GLLDSLHFTK…SGQHVGKIVV (320 aa)) is enoylreductase (ER) domain. The tract at residues 2168–2340 (SYLVAGGLGG…AVTIDLGMVQ (173 aa)) is ketoreductase (KR) domain. Residues 2453-2530 (ESIAVIMEAM…KVAEVVLQRY (78 aa)) form the Carrier domain. Position 2490 is an O-(pantetheine 4'-phosphoryl)serine (Ser-2490).

Interacts with LovD. Requires pantetheine 4'-phosphate as cofactor.

It carries out the reaction holo-[2-methylbutanoate polyketide synthase] + 2 malonyl-CoA + S-adenosyl-L-methionine + 2 NADPH + 3 H(+) = (S)-2-methylbutanoyl-[2-methylbutanoate polyketide synthase] + S-adenosyl-L-homocysteine + 2 CO2 + 2 NADP(+) + 2 CoA + H2O. It participates in polyketide biosynthesis; lovastatin biosynthesis. Its function is as follows. Lovastatin diketide synthase; part of the gene cluster that mediates the biosynthesis of lovastatin (also known as mevinolin, mevacor or monacolin K), a hypolipidemic inhibitor of (3S)-hydroxymethylglutaryl-coenzyme A (HMG-CoA) reductase (HMGR). The first step in the biosynthesis of lovastatin is the production of dihydromonacolin L acid by the lovastatin nonaketide synthase lovB and the trans-acting enoyl reductase lovC via condensation of one acetyl-CoA unit and 8 malonyl-CoA units. Dihydromonacolin L acid is released from lovB by the thioesterase lovG. Next, dihydromonacolin L acid is oxidized by the dihydromonacolin L monooxygenase lovA twice to form monacolin J acid. The 2-methylbutyrate moiety of lovastatin is synthesized by the lovastatin diketide synthase lovF via condensation of one acetyl-CoA unit and one malonyl-CoA unit. Finally, the covalent attachment of this moiety to monacolin J acid is catalyzed by the transesterase lovD to yield lovastatin. LovD has broad substrate specificity and can also convert monacolin J to simvastatin using alpha-dimethylbutanoyl-S-methyl-3-mercaptopropionate (DMB-S-MMP) as the thioester acyl donor, and can also catalyze the reverse reaction and function as hydrolase in vitro. LovD has much higher activity with LovF-bound 2-methylbutanoate than with free diketide substrates. The protein is Lovastatin diketide synthase lovF of Aspergillus terreus.